The sequence spans 208 residues: MGVTVVSHPLVQHKLTIMRKKETSTASFRRLLKEISLLLCYEVTRNLELTTMSIETPLMPMEAPVLEGKKLVFASILRAGNGLLEGMLDLVPAARVAHIGLYRDHDTLQPIEYYFKAPEDIVNRLVIVVDPMLATANSAIAAIDKLKERGATNIRFLCLLAAPEGIERFTKAHPDVEVFTASIDERLDEKGYIVPGLGDAGDRMYGTK.

Residues Arg78, Arg103, and 130-138 (DPMLATANS) each bind 5-phospho-alpha-D-ribose 1-diphosphate. Uracil is bound by residues Ile193 and 198 to 200 (GDA). Residue Asp199 participates in 5-phospho-alpha-D-ribose 1-diphosphate binding.

It belongs to the UPRTase family. Requires Mg(2+) as cofactor.

It carries out the reaction UMP + diphosphate = 5-phospho-alpha-D-ribose 1-diphosphate + uracil. The protein operates within pyrimidine metabolism; UMP biosynthesis via salvage pathway; UMP from uracil: step 1/1. Its activity is regulated as follows. Allosterically activated by GTP. Functionally, catalyzes the conversion of uracil and 5-phospho-alpha-D-ribose 1-diphosphate (PRPP) to UMP and diphosphate. In Brucella ovis (strain ATCC 25840 / 63/290 / NCTC 10512), this protein is Uracil phosphoribosyltransferase.